The chain runs to 174 residues: Crossover junction endodeoxyribonuclease RuvC (174 aa).

Residues D8, E69, and D141 contribute to the active site. 3 residues coordinate Mg(2+): D8, E69, and D141.

It belongs to the RuvC family. Homodimer which binds Holliday junction (HJ) DNA. The HJ becomes 2-fold symmetrical on binding to RuvC with unstacked arms; it has a different conformation from HJ DNA in complex with RuvA. In the full resolvosome a probable DNA-RuvA(4)-RuvB(12)-RuvC(2) complex forms which resolves the HJ. The cofactor is Mg(2+).

The protein localises to the cytoplasm. It catalyses the reaction Endonucleolytic cleavage at a junction such as a reciprocal single-stranded crossover between two homologous DNA duplexes (Holliday junction).. In terms of biological role, the RuvA-RuvB-RuvC complex processes Holliday junction (HJ) DNA during genetic recombination and DNA repair. Endonuclease that resolves HJ intermediates. Cleaves cruciform DNA by making single-stranded nicks across the HJ at symmetrical positions within the homologous arms, yielding a 5'-phosphate and a 3'-hydroxyl group; requires a central core of homology in the junction. The consensus cleavage sequence is 5'-(A/T)TT(C/G)-3'. Cleavage occurs on the 3'-side of the TT dinucleotide at the point of strand exchange. HJ branch migration catalyzed by RuvA-RuvB allows RuvC to scan DNA until it finds its consensus sequence, where it cleaves and resolves the cruciform DNA. This is Crossover junction endodeoxyribonuclease RuvC from Xanthomonas campestris pv. campestris (strain 8004).